A 464-amino-acid chain; its full sequence is Cytoplasmic tRNA 2-thiolation protein 2 (464 aa).

It belongs to the CTU2/NCS2 family.

Its subcellular location is the cytoplasm. It participates in tRNA modification; 5-methoxycarbonylmethyl-2-thiouridine-tRNA biosynthesis. Its function is as follows. Plays a central role in 2-thiolation of mcm(5)S(2)U at tRNA wobble positions of tRNA(Lys), tRNA(Glu) and tRNA(Gln). May act by forming a heterodimer with NCS6/CTU1 that ligates sulfur from thiocarboxylated URM1 onto the uridine of tRNAs at wobble position. This is Cytoplasmic tRNA 2-thiolation protein 2 from Oryza sativa subsp. indica (Rice).